Here is a 486-residue protein sequence, read N- to C-terminus: NADH-ubiquinone oxidoreductase chain 4 (486 aa).

The next 13 helical transmembrane spans lie at 26–46 (HFYL…YINF), 76–96 (GLLF…VLLI), 113–132 (LYYT…FWAL), 134–156 (YISF…HIYG), 165–185 (FYVL…IVVI), 209–231 (IIWL…HVWL), 239–259 (PLAG…YAIL), 271–291 (ILYT…TSLA), 298–318 (LKVI…LGVC), 329–349 (IVLG…VGGI), 372–392 (LATY…TGNF), 407–427 (PIIG…QLKL), and 452–472 (FIMN…QIMY).

It belongs to the complex I subunit 4 family. As to quaternary structure, complex I is composed of 37 different subunits.

It is found in the mitochondrion membrane. It carries out the reaction a ubiquinone + NADH + 5 H(+)(in) = a ubiquinol + NAD(+) + 4 H(+)(out). In terms of biological role, core subunit of the mitochondrial membrane respiratory chain NADH dehydrogenase (Complex I) that is believed to belong to the minimal assembly required for catalysis. Complex I functions in the transfer of electrons from NADH to the respiratory chain. The immediate electron acceptor for the enzyme is believed to be ubiquinone. The chain is NADH-ubiquinone oxidoreductase chain 4 (ND4) from Yarrowia lipolytica (strain CLIB 122 / E 150) (Yeast).